Here is a 263-residue protein sequence, read N- to C-terminus: 4-hydroxy-tetrahydrodipicolinate reductase (263 aa).

Residues 7–12 and Asp33 each bind NAD(+); that span reads GASGRM. Arg34 is an NADP(+) binding site. NAD(+) is bound by residues 96–98 and 120–123; these read GTT and APNM. His153 functions as the Proton donor/acceptor in the catalytic mechanism. His154 is a binding site for (S)-2,3,4,5-tetrahydrodipicolinate. Catalysis depends on Lys157, which acts as the Proton donor. 163–164 contacts (S)-2,3,4,5-tetrahydrodipicolinate; it reads GT.

Belongs to the DapB family.

It localises to the cytoplasm. The catalysed reaction is (S)-2,3,4,5-tetrahydrodipicolinate + NAD(+) + H2O = (2S,4S)-4-hydroxy-2,3,4,5-tetrahydrodipicolinate + NADH + H(+). It catalyses the reaction (S)-2,3,4,5-tetrahydrodipicolinate + NADP(+) + H2O = (2S,4S)-4-hydroxy-2,3,4,5-tetrahydrodipicolinate + NADPH + H(+). Its pathway is amino-acid biosynthesis; L-lysine biosynthesis via DAP pathway; (S)-tetrahydrodipicolinate from L-aspartate: step 4/4. Functionally, catalyzes the conversion of 4-hydroxy-tetrahydrodipicolinate (HTPA) to tetrahydrodipicolinate. The polypeptide is 4-hydroxy-tetrahydrodipicolinate reductase (Ralstonia nicotianae (strain ATCC BAA-1114 / GMI1000) (Ralstonia solanacearum)).